Reading from the N-terminus, the 495-residue chain is Glucose-6-phosphate 1-dehydrogenase (495 aa).

Residue Lys51 forms an Isoglutamyl lysine isopeptide (Lys-Gln) (interchain with Q-Cter in protein Pup) linkage. NADP(+)-binding positions include 94–95 (DL) and Lys154. Residues His184, Lys188, Glu222, and Asp241 each coordinate substrate. The active-site Proton acceptor is His246. Lys345 provides a ligand contact to substrate.

It belongs to the glucose-6-phosphate dehydrogenase family.

It carries out the reaction D-glucose 6-phosphate + NADP(+) = 6-phospho-D-glucono-1,5-lactone + NADPH + H(+). The protein operates within carbohydrate degradation; pentose phosphate pathway; D-ribulose 5-phosphate from D-glucose 6-phosphate (oxidative stage): step 1/3. Its function is as follows. Catalyzes the oxidation of glucose 6-phosphate to 6-phosphogluconolactone. The chain is Glucose-6-phosphate 1-dehydrogenase from Mycolicibacterium smegmatis (strain ATCC 700084 / mc(2)155) (Mycobacterium smegmatis).